The chain runs to 393 residues: MDVVCTEHQMRKPTVEIPPRKLLLSSKSFPSDSSSPRSPRKHNWNKSNKITSEHEEDNEDNNRENKEYCYDSDSDDPYASDHFRMFEFKIRRCTRSRSHDWTDCPFAHPGEKARRRDPRRFQYSGEVCPEFRRGGDCSRGDDCEFAHGVFECWLHPIRYRTEACKDGKHCKRKVCFFAHSPRQLRVLPPENVSGVSASPSPAAKNPCCLFCSSSPTSTLLGNLSHLSRSPSLSPPMSPANKAAAFSRLRNRAASAVSAAAAAGSMNYKDVLSELVNSLDSMSLAEALQASSSSPVTTPVSAAAAAFASSCGLSNQRLHLQQQQPSSPLQFALSPSTPSYLTNSPQANFFSDDFTPRRRQMNDFTAMTAVRENTNIEDGSCGDPDLGWVNDLLT.

Positions 1–71 (MDVVCTEHQM…NRENKEYCYD (71 aa)) are disordered. Over residues 20–37 (RKLLLSSKSFPSDSSSPR) the composition is skewed to low complexity. Positions 60-69 (DNNRENKEYC) are enriched in basic and acidic residues. 2 C3H1-type zinc fingers span residues 122 to 150 (QYSG…HGVF) and 159 to 181 (YRTE…AHSP).

Interacts with MARD1/FLZ9 and RD21A. In terms of tissue distribution, specifically expressed in seeds.

Its subcellular location is the nucleus. In terms of biological role, probable transcription repressor that functions as a negative regulator of phytochrome-mediated promotion of seed germination. Inhibits seed germination by regulating the expression of gibberellic acid (GA) and abscisic acid (ABA) metabolic genes. Does not regulate the expression of the DELLA genes RGA and RGA1. Activated by PIL5, a phytochrome-interacting basic helix-loop-helix transcription factor. Represses directly JMJ20 and JMJ22 expression in the absence of red light (R) and in far-red (FR) conditions. The polypeptide is Zinc finger CCCH domain-containing protein 2 (Arabidopsis thaliana (Mouse-ear cress)).